The primary structure comprises 241 residues: Phosphoglycolate phosphatase (241 aa).

The active-site Nucleophile is the aspartate 8. Mg(2+) contacts are provided by aspartate 8, aspartate 10, and aspartate 174.

This sequence belongs to the HAD-like hydrolase superfamily. CbbY/CbbZ/Gph/YieH family. The cofactor is Mg(2+).

It catalyses the reaction 2-phosphoglycolate + H2O = glycolate + phosphate. It functions in the pathway organic acid metabolism; glycolate biosynthesis; glycolate from 2-phosphoglycolate: step 1/1. Functionally, specifically catalyzes the dephosphorylation of 2-phosphoglycolate. Is involved in the dissimilation of the intracellular 2-phosphoglycolate formed during the DNA repair of 3'-phosphoglycolate ends, a major class of DNA lesions induced by oxidative stress. The chain is Phosphoglycolate phosphatase from Rhodospirillum rubrum (strain ATCC 11170 / ATH 1.1.1 / DSM 467 / LMG 4362 / NCIMB 8255 / S1).